The following is a 363-amino-acid chain: Chalcone synthase B (363 aa).

Cys170 is an active-site residue.

Belongs to the thiolase-like superfamily. Chalcone/stilbene synthases family.

The catalysed reaction is (E)-4-coumaroyl-CoA + 3 malonyl-CoA + 3 H(+) = 2',4,4',6'-tetrahydroxychalcone + 3 CO2 + 4 CoA. The protein operates within secondary metabolite biosynthesis; flavonoid biosynthesis. Its function is as follows. The primary product of this enzyme is 4,2',4',6'-tetrahydroxychalcone (also termed naringenin-chalcone or chalcone) which can under specific conditions spontaneously isomerize into naringenin. The polypeptide is Chalcone synthase B (CHSB) (Ipomoea cordatotriloba (Tievine)).